The following is a 68-amino-acid chain: ATP-dependent 6-phosphofructokinase (68 aa).

17–20 (GDGT) serves as a coordination point for ATP. Position 18 (Asp18) interacts with Mg(2+). Asp48 (proton acceptor) is an active-site residue.

This sequence belongs to the phosphofructokinase type A (PFKA) family. PPi-dependent PFK group II subfamily. Atypical ATP-dependent clade 'X' sub-subfamily. Homotetramer. It depends on Mg(2+) as a cofactor.

The protein localises to the cytoplasm. It catalyses the reaction beta-D-fructose 6-phosphate + ATP = beta-D-fructose 1,6-bisphosphate + ADP + H(+). It functions in the pathway carbohydrate degradation; glycolysis; D-glyceraldehyde 3-phosphate and glycerone phosphate from D-glucose: step 3/4. Allosterically activated by AMP. Catalyzes the phosphorylation of D-fructose 6-phosphate to fructose 1,6-bisphosphate by ATP, the first committing step of glycolysis. This chain is ATP-dependent 6-phosphofructokinase (PFK), found in Triticum aestivum (Wheat).